We begin with the raw amino-acid sequence, 699 residues long: Auxin response factor 1 (699 aa).

Residues 122 to 224 constitute a DNA-binding region (TF-B3); that stretch reads FCKILTPSDT…EQRVGVRRLV (103 aa). 2 disordered regions span residues 539 to 565 and 680 to 699; these read TTTDDKSSVGAGEASAKGTGSHEDSGQ and EPHPKLLSSANPEQDQKTGF. The region spanning 595 to 684 is the PB1 domain; the sequence is RTRIKVQMHG…DEKKIEPHPK (90 aa). Residues 687-699 show a composition bias toward polar residues; it reads SSANPEQDQKTGF.

This sequence belongs to the ARF family. Homodimers and heterodimers. Expressed in roots, culms, leaves and young panicles.

It is found in the nucleus. In terms of biological role, auxin response factors (ARFs) are transcriptional factors that bind specifically to the DNA sequence 5'-TGTCTC-3' found in the auxin-responsive promoter elements (AuxREs). In Oryza sativa subsp. japonica (Rice), this protein is Auxin response factor 1 (ARF1).